Reading from the N-terminus, the 270-residue chain is MTSLKQQPPHLLRGIPLAVRNLKKAFGTREVLKDIDLHIPAGQFVAIVGRSGCGKSTLLRLLAGLDKPTEGQLLAGSAPLDDAREDTRLMFQEARLLPWKKIIDNVGLGLSGDWRAQALEALEAVGLAERANEWPAALSGGQKQRVALARALIHKPRLLLLDEPLGALDALTRIEMQQLIEKLWHQYGFTVLLVTHDVSEAVAIADRVILIEEGQIGLDLLVDLPRPRVRGSHRLAALEAEVLNRVLALPGSPPDPEPFSPLPTQLRWAN.

The ABC transporter domain occupies 17 to 238; it reads LAVRNLKKAF…VRGSHRLAAL (222 aa). 49–56 is a binding site for ATP; it reads GRSGCGKS.

The protein belongs to the ABC transporter superfamily. Aliphatic sulfonates importer (TC 3.A.1.17.2) family. In terms of assembly, the complex is composed of two ATP-binding proteins (SsuB), two transmembrane proteins (SsuC) and a solute-binding protein (SsuA).

Its subcellular location is the cell inner membrane. It carries out the reaction ATP + H2O + aliphatic sulfonate-[sulfonate-binding protein]Side 1 = ADP + phosphate + aliphatic sulfonateSide 2 + [sulfonate-binding protein]Side 1.. Part of the ABC transporter complex SsuABC involved in aliphatic sulfonates import. Responsible for energy coupling to the transport system. This is Aliphatic sulfonates import ATP-binding protein SsuB 3 from Pseudomonas savastanoi pv. phaseolicola (strain 1448A / Race 6) (Pseudomonas syringae pv. phaseolicola (strain 1448A / Race 6)).